A 604-amino-acid chain; its full sequence is Glutamine--fructose-6-phosphate aminotransferase [isomerizing] (604 aa).

Cys-2 acts as the Nucleophile; for GATase activity in catalysis. The region spanning 2–219 is the Glutamine amidotransferase type-2 domain; sequence CGIMGAVSER…EGDSACVTTQ (218 aa). SIS domains follow at residues 279–427 and 454–594; these read LRAS…DNRA and LASL…VDQP. Residue Lys-599 is the For Fru-6P isomerization activity of the active site.

As to quaternary structure, homodimer.

The protein resides in the cytoplasm. The catalysed reaction is D-fructose 6-phosphate + L-glutamine = D-glucosamine 6-phosphate + L-glutamate. Its function is as follows. Catalyzes the first step in hexosamine metabolism, converting fructose-6P into glucosamine-6P using glutamine as a nitrogen source. The chain is Glutamine--fructose-6-phosphate aminotransferase [isomerizing] from Legionella pneumophila (strain Lens).